The chain runs to 261 residues: MIDPVAIQLGPISIRWYAICIVTGLVLAVYLAMKEAPRRKIIPDDILDFILVAFPVAIVGARLYYVAFEWDYYGKNLIKIIDFWNGGIAGIAIYGGLIAGAIVLYFFCRRRLIHPVDFLDIAAPSVMIAQSIGRWGNFANHEAYGAAVKSLDYLPSFIRENMYIEGSYRQPTFLYESVWNLIGFILIIVLRRRPKLLRQGEIAAFYLIWYGFGRMIIEGMRTDSLMFAGLRVSQWLSLILIFVGIGIIIYQRKKKAPYYQE.

Helical transmembrane passes span 12–32 (ISIRWYAICIVTGLVLAVYLA), 41–61 (IIPDDILDFILVAFPVAIVGA), 87–107 (GIAGIAIYGGLIAGAIVLYFF), and 112–132 (LIHPVDFLDIAAPSVMIAQSI). Arg134 contributes to the a 1,2-diacyl-sn-glycero-3-phospho-(1'-sn-glycerol) binding site. Helical transmembrane passes span 170–190 (QPTFLYESVWNLIGFILIIVL), 200–220 (GEIAAFYLIWYGFGRMIIEGM), and 229–249 (GLRVSQWLSLILIFVGIGIII).

Belongs to the Lgt family.

Its subcellular location is the cell membrane. It catalyses the reaction L-cysteinyl-[prolipoprotein] + a 1,2-diacyl-sn-glycero-3-phospho-(1'-sn-glycerol) = an S-1,2-diacyl-sn-glyceryl-L-cysteinyl-[prolipoprotein] + sn-glycerol 1-phosphate + H(+). The protein operates within protein modification; lipoprotein biosynthesis (diacylglyceryl transfer). In terms of biological role, catalyzes the transfer of the diacylglyceryl group from phosphatidylglycerol to the sulfhydryl group of the N-terminal cysteine of a prolipoprotein, the first step in the formation of mature lipoproteins. The polypeptide is Phosphatidylglycerol--prolipoprotein diacylglyceryl transferase (Streptococcus sanguinis (strain SK36)).